Consider the following 259-residue polypeptide: Global transcriptional regulator CodY (259 aa).

The interval 1-155 (MALLQKTRKI…GATVVGMEIL (155 aa)) is GAF domain. A DNA-binding region (H-T-H motif) is located at residues 203–222 (ASKIADRVGITRSVIVNALR). The residue at position 215 (Ser215) is a Phosphoserine.

It belongs to the CodY family.

It is found in the cytoplasm. In terms of biological role, DNA-binding global transcriptional regulator which is involved in the adaptive response to starvation and acts by directly or indirectly controlling the expression of numerous genes in response to nutrient availability. During rapid exponential growth, CodY is highly active and represses genes whose products allow adaptation to nutrient depletion. In Bacillus licheniformis (strain ATCC 14580 / DSM 13 / JCM 2505 / CCUG 7422 / NBRC 12200 / NCIMB 9375 / NCTC 10341 / NRRL NRS-1264 / Gibson 46), this protein is Global transcriptional regulator CodY.